The chain runs to 671 residues: Protein KHNYN (671 aa).

Disordered regions lie at residues 234–274 (RVAG…LSGE), 294–327 (EVAP…AHVP), 344–402 (HNGS…GGNL), and 577–626 (GPTL…RKTR). A compositionally biased stretch (basic and acidic residues) spans 250 to 272 (TVEKEERKQDAVRDMGSGRKELS). The segment covering 351-365 (PRVPSPPPAPEPPWP) has biased composition (pro residues). The residue at position 355 (Ser-355) is a Phosphoserine. A compositionally biased stretch (basic and acidic residues) spans 367–381 (GDRDRDRDRGDRGDK). One can recognise an RNase NYN domain in the interval 430 to 582 (LRHIVIDGSN…LGRNGPTLDE (153 aa)). The span at 591–612 (QGSSKTQQPSKGSTEQANQQQG) shows a compositional bias: polar residues.

This sequence belongs to the N4BP1 family.

The chain is Protein KHNYN (Khnyn) from Mus musculus (Mouse).